Reading from the N-terminus, the 497-residue chain is Glucose-6-phosphate 1-dehydrogenase (497 aa).

Residues 15-22 (GASGDLSK), Arg49, and Lys153 contribute to the NADP(+) site. Residues Lys153, 183 to 187 (HYLGK), Glu221, and Asp240 contribute to the D-glucose 6-phosphate site. The active-site Proton acceptor is His245. Position 336 (Arg336) interacts with NADP(+). Residue Lys339 coordinates D-glucose 6-phosphate. 3 residues coordinate NADP(+): Lys345, Arg349, and Arg371. Gln373 provides a ligand contact to D-glucose 6-phosphate. Residues 379-381 (YLK), 399-401 (DLT), and Arg466 contribute to the NADP(+) site.

This sequence belongs to the glucose-6-phosphate dehydrogenase family.

The enzyme catalyses D-glucose 6-phosphate + NADP(+) = 6-phospho-D-glucono-1,5-lactone + NADPH + H(+). It functions in the pathway carbohydrate degradation; pentose phosphate pathway; D-ribulose 5-phosphate from D-glucose 6-phosphate (oxidative stage): step 1/3. In terms of biological role, catalyzes the rate-limiting step of the oxidative pentose-phosphate pathway, which represents a route for the dissimilation of carbohydrates besides glycolysis. The main function of this enzyme is to provide reducing power (NADPH) and pentose phosphates for fatty acid and nucleic acid synthesis. In Kluyveromyces lactis (strain ATCC 8585 / CBS 2359 / DSM 70799 / NBRC 1267 / NRRL Y-1140 / WM37) (Yeast), this protein is Glucose-6-phosphate 1-dehydrogenase (ZWF).